The chain runs to 72 residues: Translation initiation factor IF-1 (72 aa).

One can recognise an S1-like domain in the interval 1–72 (MAKDDVIEVD…DKGRITYRHK (72 aa)).

This sequence belongs to the IF-1 family. As to quaternary structure, component of the 30S ribosomal translation pre-initiation complex which assembles on the 30S ribosome in the order IF-2 and IF-3, IF-1 and N-formylmethionyl-tRNA(fMet); mRNA recruitment can occur at any time during PIC assembly.

It localises to the cytoplasm. Functionally, one of the essential components for the initiation of protein synthesis. Stabilizes the binding of IF-2 and IF-3 on the 30S subunit to which N-formylmethionyl-tRNA(fMet) subsequently binds. Helps modulate mRNA selection, yielding the 30S pre-initiation complex (PIC). Upon addition of the 50S ribosomal subunit IF-1, IF-2 and IF-3 are released leaving the mature 70S translation initiation complex. This is Translation initiation factor IF-1 from Helicobacter hepaticus (strain ATCC 51449 / 3B1).